A 141-amino-acid chain; its full sequence is Hemoglobin subunit alpha-2 (141 aa).

The 141-residue stretch at 1-141 (VLSEGNKKII…VTYQLSSLYR (141 aa)) folds into the Globin domain. His-59 is an O2 binding site. Position 88 (His-88) interacts with heme b.

The protein belongs to the globin family. As to quaternary structure, heterotetramer of two alpha chains and two beta chains. Red blood cells.

In terms of biological role, involved in oxygen transport from the lung to the various peripheral tissues. The chain is Hemoglobin subunit alpha-2 from Torpedo marmorata (Marbled electric ray).